Reading from the N-terminus, the 503-residue chain is ATP synthase subunit alpha (503 aa).

169–176 is a binding site for ATP; sequence GDRGTGKT.

This sequence belongs to the ATPase alpha/beta chains family. F-type ATPases have 2 components, CF(1) - the catalytic core - and CF(0) - the membrane proton channel. CF(1) has five subunits: alpha(3), beta(3), gamma(1), delta(1), epsilon(1). CF(0) has three main subunits: a(1), b(2) and c(9-12). The alpha and beta chains form an alternating ring which encloses part of the gamma chain. CF(1) is attached to CF(0) by a central stalk formed by the gamma and epsilon chains, while a peripheral stalk is formed by the delta and b chains.

Its subcellular location is the cell inner membrane. It catalyses the reaction ATP + H2O + 4 H(+)(in) = ADP + phosphate + 5 H(+)(out). In terms of biological role, produces ATP from ADP in the presence of a proton gradient across the membrane. The alpha chain is a regulatory subunit. The chain is ATP synthase subunit alpha from Leptospira interrogans serogroup Icterohaemorrhagiae serovar copenhageni (strain Fiocruz L1-130).